The primary structure comprises 134 residues: Large ribosomal subunit protein bL20 (134 aa).

Belongs to the bacterial ribosomal protein bL20 family.

Functionally, binds directly to 23S ribosomal RNA and is necessary for the in vitro assembly process of the 50S ribosomal subunit. It is not involved in the protein synthesizing functions of that subunit. This chain is Large ribosomal subunit protein bL20, found in Rhizobium rhizogenes (strain K84 / ATCC BAA-868) (Agrobacterium radiobacter).